The sequence spans 1002 residues: DNA-directed RNA polymerase 1, mitochondrial (1002 aa).

The transit peptide at 1-21 directs the protein to the mitochondrion; it reads MWRYISKQAYSRKFRNSHDSA. Residues aspartate 703, lysine 778, and aspartate 935 contribute to the active site.

It belongs to the phage and mitochondrial RNA polymerase family. In terms of tissue distribution, the highest levels of expression are detected in the mature leaves. The level of expression is lowest in the cotyledons.

It is found in the mitochondrion. It catalyses the reaction RNA(n) + a ribonucleoside 5'-triphosphate = RNA(n+1) + diphosphate. Functionally, DNA-dependent RNA polymerase catalyzes the transcription of DNA into RNA using the four ribonucleoside triphosphates as substrates. This chain is DNA-directed RNA polymerase 1, mitochondrial (RPOT1), found in Nicotiana sylvestris (Wood tobacco).